Consider the following 202-residue polypeptide: Cytochrome c oxidase assembly protein CtaG (202 aa).

Residues 1–14 lie on the Cytoplasmic side of the membrane; it reads MSDKAAAPRKQGRN. The chain crosses the membrane as a helical; Signal-anchor for type II membrane protein span at residues 15–37; that stretch reads NGAVVMMCLSFVFGMGAMSYAAV. Residues 38–202 are Periplasmic-facing; the sequence is PLYRIFCQVT…GGTVKIEKKL (165 aa).

Belongs to the COX11/CtaG family.

The protein localises to the cell inner membrane. Functionally, exerts its effect at some terminal stage of cytochrome c oxidase synthesis, probably by being involved in the insertion of the copper B into subunit I. The polypeptide is Cytochrome c oxidase assembly protein CtaG (Rhizobium etli (strain ATCC 51251 / DSM 11541 / JCM 21823 / NBRC 15573 / CFN 42)).